The following is an 85-amino-acid chain: Sec-independent protein translocase protein TatA (85 aa).

The chain crosses the membrane as a helical span at residues Met1–Gly21. Positions Met43 to Ala85 are disordered. Over residues Asp46–Ala57 the composition is skewed to basic and acidic residues. Residues Ala58–Ala73 are compositionally biased toward low complexity. Over residues Thr74–Ala85 the composition is skewed to basic and acidic residues.

This sequence belongs to the TatA/E family. In terms of assembly, the Tat system comprises two distinct complexes: a TatABC complex, containing multiple copies of TatA, TatB and TatC subunits, and a separate TatA complex, containing only TatA subunits. Substrates initially bind to the TatABC complex, which probably triggers association of the separate TatA complex to form the active translocon.

It is found in the cell inner membrane. Part of the twin-arginine translocation (Tat) system that transports large folded proteins containing a characteristic twin-arginine motif in their signal peptide across membranes. TatA could form the protein-conducting channel of the Tat system. This chain is Sec-independent protein translocase protein TatA, found in Shewanella sp. (strain ANA-3).